Here is a 492-residue protein sequence, read N- to C-terminus: Octanoyltransferase (492 aa).

Positions 1–255 (MRCILLGSGT…GYDGLEAIID (255 aa)) are unknown. The tract at residues 256–492 (EKGIRIKDFE…AVFRRNFGAL (237 aa)) is lipB domain. The BPL/LPL catalytic domain maps to 305–492 (RKPQNTLLFC…AVFRRNFGAL (188 aa)). Substrate is bound by residues 350-357 (RGGDITYH), 423-425 (AIG), and 436-438 (GFA). Cys-454 serves as the catalytic Acyl-thioester intermediate.

It in the C-terminal section; belongs to the LipB family.

It localises to the cytoplasm. It catalyses the reaction octanoyl-[ACP] + L-lysyl-[protein] = N(6)-octanoyl-L-lysyl-[protein] + holo-[ACP] + H(+). The protein operates within protein modification; protein lipoylation via endogenous pathway; protein N(6)-(lipoyl)lysine from octanoyl-[acyl-carrier-protein]: step 1/2. Functionally, catalyzes the transfer of endogenously produced octanoic acid from octanoyl-acyl-carrier-protein onto the lipoyl domains of lipoate-dependent enzymes. Lipoyl-ACP can also act as a substrate although octanoyl-ACP is likely to be the physiological substrate. This chain is Octanoyltransferase, found in Porphyromonas gingivalis (strain ATCC BAA-308 / W83).